We begin with the raw amino-acid sequence, 575 residues long: Interleukin-10 receptor subunit alpha (575 aa).

The signal sequence occupies residues 1-16; the sequence is MLSRLLPFLVTISSLS. Residues 17–241 lie on the Extracellular side of the membrane; that stretch reads LEFIAYGTEL…QYFTVTNLSI (225 aa). N-linked (GlcNAc...) asparagine glycans are attached at residues Asn50, Asn66, Asn113, and Asn182. Cysteines 204 and 225 form a disulfide. The N-linked (GlcNAc...) asparagine glycan is linked to Asn238. Residues 242–262 traverse the membrane as a helical segment; it reads LVISMLLFCGILVCLVLQWYI. Residues 263 to 575 lie on the Cytoplasmic side of the membrane; it reads RHPGKLPTVL…PLISSLQVEE (313 aa). Residues Tyr443 and Tyr493 each carry the phosphotyrosine modification.

Belongs to the type II cytokine receptor family. As to quaternary structure, interacts with IL10. Interacts with IL10RB. Interacts (via its cytoplasmic domain) with JAK1 (via N-terminus). Interacts with BTRC; this interaction leads to IL10RA ubiquitination and subsequent degradation. Interacts with STAT3. Phosphorylated. Phosphorylation of the cytoplasmic tail induced STAT3 activation. In terms of processing, ubiquitinated by BTRC; ubiquitination leads to endocytosis and subsequent degradation of IL10RA.

It is found in the cell membrane. The protein localises to the cytoplasm. Cell surface receptor for the cytokine IL10 that participates in IL10-mediated anti-inflammatory functions, limiting excessive tissue disruption caused by inflammation. Upon binding to IL10, induces a conformational change in IL10RB, allowing IL10RB to bind IL10 as well. In turn, the heterotetrameric assembly complex, composed of two subunits of IL10RA and IL10RB, activates the kinases JAK1 and TYK2 that are constitutively associated with IL10RA and IL10RB respectively. These kinases then phosphorylate specific tyrosine residues in the intracellular domain in IL10RA leading to the recruitment and subsequent phosphorylation of STAT3. Once phosphorylated, STAT3 homodimerizes, translocates to the nucleus and activates the expression of anti-inflammatory genes. In addition, IL10RA-mediated activation of STAT3 inhibits starvation-induced autophagy. This chain is Interleukin-10 receptor subunit alpha (Il10ra), found in Mus musculus (Mouse).